The sequence spans 202 residues: NADH-quinone oxidoreductase subunit C (202 aa).

The protein belongs to the complex I 30 kDa subunit family. In terms of assembly, NDH-1 is composed of 14 different subunits. Subunits NuoB, C, D, E, F, and G constitute the peripheral sector of the complex.

The protein resides in the cell inner membrane. The catalysed reaction is a quinone + NADH + 5 H(+)(in) = a quinol + NAD(+) + 4 H(+)(out). In terms of biological role, NDH-1 shuttles electrons from NADH, via FMN and iron-sulfur (Fe-S) centers, to quinones in the respiratory chain. The immediate electron acceptor for the enzyme in this species is believed to be ubiquinone. Couples the redox reaction to proton translocation (for every two electrons transferred, four hydrogen ions are translocated across the cytoplasmic membrane), and thus conserves the redox energy in a proton gradient. The polypeptide is NADH-quinone oxidoreductase subunit C (Acidovorax sp. (strain JS42)).